We begin with the raw amino-acid sequence, 90 residues long: DNA-binding protein HU (90 aa).

The segment at 57–90 is disordered; that stretch reads ARKGVNPQTRKPITIPERKVPKFKPGKALKEKVK.

The protein belongs to the bacterial histone-like protein family.

Histone-like DNA-binding protein which is capable of wrapping DNA to stabilize it, and thus to prevent its denaturation under extreme environmental conditions. The protein is DNA-binding protein HU (hup) of Thermotoga maritima (strain ATCC 43589 / DSM 3109 / JCM 10099 / NBRC 100826 / MSB8).